Consider the following 207-residue polypeptide: uncharacterized protein (207 aa).

The N-terminal stretch at 1-19 (MRFNVSFLLSLLLPTLAFA) is a signal peptide.

It to P.multocida PM1509.

This is an uncharacterized protein from Pasteurella multocida (strain Pm70).